The primary structure comprises 424 residues: Histidine--tRNA ligase (424 aa).

Belongs to the class-II aminoacyl-tRNA synthetase family. Homodimer.

Its subcellular location is the cytoplasm. It carries out the reaction tRNA(His) + L-histidine + ATP = L-histidyl-tRNA(His) + AMP + diphosphate + H(+). The polypeptide is Histidine--tRNA ligase (Shewanella amazonensis (strain ATCC BAA-1098 / SB2B)).